Here is a 258-residue protein sequence, read N- to C-terminus: Undecaprenyl-diphosphatase (258 aa).

8 helical membrane passes run 1 to 21, 42 to 62, 71 to 91, 96 to 116, 134 to 154, 173 to 193, 211 to 231, and 237 to 257; these read MSIIDAVILGIVEGLTEFLPV, LKCFEVVIQLGSILAVVFTFF, LWIKLIIGFLPTAAIGYLLYS, LFSQNVVVYMLIIWGVIFIVV, GISYKQAFFIGLSQCFAMVPG, QTAAAFSFLLAVPTMFAATFY, LFLLGGFVAFLVALFAIKMFL, and FDYIPFGIYRILIAFAFMFFV.

This sequence belongs to the UppP family.

The protein resides in the cell inner membrane. The enzyme catalyses di-trans,octa-cis-undecaprenyl diphosphate + H2O = di-trans,octa-cis-undecaprenyl phosphate + phosphate + H(+). Its function is as follows. Catalyzes the dephosphorylation of undecaprenyl diphosphate (UPP). Confers resistance to bacitracin. In Campylobacter hominis (strain ATCC BAA-381 / DSM 21671 / CCUG 45161 / LMG 19568 / NCTC 13146 / CH001A), this protein is Undecaprenyl-diphosphatase.